The chain runs to 269 residues: Lck-interacting transmembrane adapter 1 (269 aa).

At 1–7 the chain is on the extracellular side; it reads MRPPVPS. A helical; Signal-anchor for type III membrane protein membrane pass occupies residues 8 to 28; the sequence is APLALWVLGCFSLLLWLWALC. S-palmitoyl cysteine attachment occurs at residues cysteine 28 and cysteine 31. Over 29–269 the chain is Cytoplasmic; sequence TACHRKRAQR…VYESIKEMGL (241 aa). Residues 102 to 133 form a disordered region; that stretch reads STRSQVPNSAFPPRQLPRAPPAAPATAPSTSS. Positions 115-124 are enriched in pro residues; the sequence is RQLPRAPPAA. Tyrosine 137, tyrosine 175, and tyrosine 207 each carry phosphotyrosine. The interaction with GRB2 stretch occupies residues 137–140; sequence YSNV. 2 interaction with CSK regions span residues 175–178 and 207–210; these read YACI and YSRV. Residues tyrosine 242 and tyrosine 261 each carry the phosphotyrosine; by LYN or LCK modification. The interaction with LCK and PIK3R1 stretch occupies residues 242-245; that stretch reads YEAI. The tract at residues 261 to 264 is interaction with LCK, PLCG2 and PIK3R1; it reads YESI. Serine 263 carries the phosphoserine modification.

As to quaternary structure, when phosphorylated in response to TCR stimulation and/or CD4 costimulation, interacts with LCK, CSK, FYN, PTPN11/SHP2, GRB2, PIK3R1 and GRAP2. When phosphorylated in response to BCR activation, interacts with LYN, PIK3R1, PLCG2 and GRB2. Palmitoylation of Cys-28 and Cys-31 is required for raft targeting. Post-translationally, phosphorylated on tyrosines upon TCR activation and/or CD4 coreceptor stimulation, or upon BCR stimulation; which leads to the recruitment of SH2-containing proteins. In terms of tissue distribution, expressed in spleen and lung. Present in primary B-cells and peripheral T-cells (at protein level).

It is found in the cell membrane. Involved in BCR (B-cell antigen receptor)-mediated signaling in B-cells and TCR (T-cell antigen receptor)-mediated T-cell signaling in T-cells. In absence of TCR signaling, may be involved in CD4-mediated inhibition of T-cell activation. Couples activation of these receptors and their associated kinases with distal intracellular events such as calcium mobilization or MAPK activation through the recruitment of PLCG2, GRB2, GRAP2, and other signaling molecules. This chain is Lck-interacting transmembrane adapter 1 (Lime1), found in Mus musculus (Mouse).